The sequence spans 338 residues: UDP-3-O-acylglucosamine N-acyltransferase (338 aa).

The active-site Proton acceptor is the His-251.

Belongs to the transferase hexapeptide repeat family. LpxD subfamily. As to quaternary structure, homotrimer.

The enzyme catalyses a UDP-3-O-[(3R)-3-hydroxyacyl]-alpha-D-glucosamine + a (3R)-hydroxyacyl-[ACP] = a UDP-2-N,3-O-bis[(3R)-3-hydroxyacyl]-alpha-D-glucosamine + holo-[ACP] + H(+). The protein operates within bacterial outer membrane biogenesis; LPS lipid A biosynthesis. Its function is as follows. Catalyzes the N-acylation of UDP-3-O-acylglucosamine using 3-hydroxyacyl-ACP as the acyl donor. Is involved in the biosynthesis of lipid A, a phosphorylated glycolipid that anchors the lipopolysaccharide to the outer membrane of the cell. This Psychrobacter cryohalolentis (strain ATCC BAA-1226 / DSM 17306 / VKM B-2378 / K5) protein is UDP-3-O-acylglucosamine N-acyltransferase.